The chain runs to 515 residues: Protein disulfide-isomerase (515 aa).

An N-terminal signal peptide occupies residues 1–20 (MRTFAPWILSLLGASAVASA). Thioredoxin domains are found at residues 21–136 (ADAT…QSLP) and 343–470 (VLDD…ENGK). Catalysis depends on nucleophile residues Cys58, Cys61, Cys393, and Cys396. Intrachain disulfides connect Cys58/Cys61 and Cys393/Cys396. 2 stretches are compositionally biased toward basic and acidic residues: residues 472 to 496 (KVDA…RAAS) and 506 to 515 (SDDKSEHDEL). Positions 472–515 (KVDALEVDPKKEQESGDATETRAASDETETPAATSDDKSEHDEL) are disordered. The Prevents secretion from ER motif lies at 512–515 (HDEL).

It belongs to the protein disulfide isomerase family.

Its subcellular location is the endoplasmic reticulum lumen. It catalyses the reaction Catalyzes the rearrangement of -S-S- bonds in proteins.. Functionally, participates in the folding of proteins containing disulfide bonds, may be involved in glycosylation, prolyl hydroxylation and triglyceride transfer. The chain is Protein disulfide-isomerase (pdiA) from Aspergillus oryzae (strain ATCC 42149 / RIB 40) (Yellow koji mold).